Here is a 396-residue protein sequence, read N- to C-terminus: MDEAGFRNFTVNFGPQHPAAHGVLRLVLELDGEVVERADPHIGLLHRGTEKLIEYRTYLQALPYFDRLDYVAPMNQEHAFCLAIEKLLQMPVPRRGQLIRVLFCEIGRLLSHLLNITTQALDIGALTPPLWGFEEREKLMVFYERASGARMHANYFRVGGVHQDLPEKLLDDIWNFCEPFLKVCNDLEELLSYNRIFKQRNVDVGVISLDEAWTRGFSGVMVRGSGAAWDLRKAQPYECYDELQFDIPVGKHGDCYDRYLIRMEEMRQSVRIMKQCLEKLSSVDGKGPIIEQNHKVTPPRRSEMKRSMEALIQHFKLYTEGHHVPAGEVYAAVEAPKGEFGVYLISDGSNIPYRCKIRAPSFAHLQAIDFLSHKHMLADVSAIIGSLDIVFGEIDR.

Belongs to the complex I 49 kDa subunit family. NDH-1 is composed of 14 different subunits. Subunits NuoB, C, D, E, F, and G constitute the peripheral sector of the complex.

Its subcellular location is the cell inner membrane. It carries out the reaction a quinone + NADH + 5 H(+)(in) = a quinol + NAD(+) + 4 H(+)(out). Functionally, NDH-1 shuttles electrons from NADH, via FMN and iron-sulfur (Fe-S) centers, to quinones in the respiratory chain. The immediate electron acceptor for the enzyme in this species is believed to be ubiquinone. Couples the redox reaction to proton translocation (for every two electrons transferred, four hydrogen ions are translocated across the cytoplasmic membrane), and thus conserves the redox energy in a proton gradient. This is NADH-quinone oxidoreductase subunit D 2 from Beijerinckia indica subsp. indica (strain ATCC 9039 / DSM 1715 / NCIMB 8712).